A 1479-amino-acid polypeptide reads, in one-letter code: DNA-directed RNA polymerase subunit beta'' (1479 aa).

Zn(2+) contacts are provided by C220, C296, C303, and C306. Disordered stretches follow at residues 618–640 (TRAE…REDE) and 663–756 (LEDE…KKEG). Composition is skewed to acidic residues over residues 622–631 (DSEEEYETLE), 704–717 (DEYG…EDEY), and 731–749 (LEED…PEED).

This sequence belongs to the RNA polymerase beta' chain family. RpoC2 subfamily. As to quaternary structure, in plastids the minimal PEP RNA polymerase catalytic core is composed of four subunits: alpha, beta, beta', and beta''. When a (nuclear-encoded) sigma factor is associated with the core the holoenzyme is formed, which can initiate transcription. It depends on Zn(2+) as a cofactor.

It localises to the plastid. The protein resides in the chloroplast. The enzyme catalyses RNA(n) + a ribonucleoside 5'-triphosphate = RNA(n+1) + diphosphate. Functionally, DNA-dependent RNA polymerase catalyzes the transcription of DNA into RNA using the four ribonucleoside triphosphates as substrates. In Triticum aestivum (Wheat), this protein is DNA-directed RNA polymerase subunit beta''.